We begin with the raw amino-acid sequence, 36 residues long: Photosystem I reaction center subunit VIII (36 aa).

The helical transmembrane segment at Phe10–Ile30 threads the bilayer.

Belongs to the PsaI family.

The protein resides in the plastid. Its subcellular location is the chloroplast thylakoid membrane. May help in the organization of the PsaL subunit. This is Photosystem I reaction center subunit VIII from Welwitschia mirabilis (Tree tumbo).